The following is a 366-amino-acid chain: Phenylalanine dehydrogenase (366 aa).

Position 45 (Arg-45) interacts with NAD(+). Lys-69 is an L-phenylalanine binding site. The active site involves Lys-81. NAD(+) contacts are provided by residues Asp-116, Thr-151, 181–187 (GVGKVGE), 204–205 (DI), 241–242 (AK), and 262–264 (SAN). Residue Asn-264 participates in L-phenylalanine binding.

It belongs to the Glu/Leu/Phe/Val dehydrogenases family.

It carries out the reaction L-phenylalanine + NAD(+) + H2O = 3-phenylpyruvate + NH4(+) + NADH + H(+). It functions in the pathway amino-acid biosynthesis; L-phenylalanine biosynthesis; L-phenylalanine from phenylpyruvate (PDH route): step 1/1. Functionally, catalyzes the reversible NAD(+)-dependent oxidative deamination of L-phenylalanine to phenylpyruvate. This is Phenylalanine dehydrogenase from Thermoactinomyces intermedius.